The following is a 133-amino-acid chain: Small ribosomal subunit protein uS8 (133 aa).

The protein belongs to the universal ribosomal protein uS8 family. As to quaternary structure, part of the 30S ribosomal subunit. Contacts proteins S5 and S12.

One of the primary rRNA binding proteins, it binds directly to 16S rRNA central domain where it helps coordinate assembly of the platform of the 30S subunit. The protein is Small ribosomal subunit protein uS8 of Rippkaea orientalis (strain PCC 8801 / RF-1) (Cyanothece sp. (strain PCC 8801)).